The sequence spans 372 residues: Bifunctional enzyme IspD/IspF (372 aa).

Positions 1-210 (MLDLSLIMLG…LNLNSPSNDI (210 aa)) are 2-C-methyl-D-erythritol 4-phosphate cytidylyltransferase. The segment at 211–372 (FCGNGFDVHA…LKYFNWRNVL (162 aa)) is 2-C-methyl-D-erythritol 2,4-cyclodiphosphate synthase. 2 residues coordinate a divalent metal cation: aspartate 217 and histidine 219. Residues 217 to 219 (DVH) and 243 to 244 (HS) each bind 4-CDP-2-C-methyl-D-erythritol 2-phosphate. An a divalent metal cation-binding site is contributed by histidine 251. Residues 265–267 (DIG), 270–274 (YPDND), 341–344 (TTTE), phenylalanine 348, and arginine 351 contribute to the 4-CDP-2-C-methyl-D-erythritol 2-phosphate site.

In the N-terminal section; belongs to the IspD/TarI cytidylyltransferase family. IspD subfamily. This sequence in the C-terminal section; belongs to the IspF family. Requires a divalent metal cation as cofactor.

It carries out the reaction 2-C-methyl-D-erythritol 4-phosphate + CTP + H(+) = 4-CDP-2-C-methyl-D-erythritol + diphosphate. The enzyme catalyses 4-CDP-2-C-methyl-D-erythritol 2-phosphate = 2-C-methyl-D-erythritol 2,4-cyclic diphosphate + CMP. Its pathway is isoprenoid biosynthesis; isopentenyl diphosphate biosynthesis via DXP pathway; isopentenyl diphosphate from 1-deoxy-D-xylulose 5-phosphate: step 2/6. It participates in isoprenoid biosynthesis; isopentenyl diphosphate biosynthesis via DXP pathway; isopentenyl diphosphate from 1-deoxy-D-xylulose 5-phosphate: step 4/6. Its function is as follows. Bifunctional enzyme that catalyzes the formation of 4-diphosphocytidyl-2-C-methyl-D-erythritol from CTP and 2-C-methyl-D-erythritol 4-phosphate (MEP) (IspD), and catalyzes the conversion of 4-diphosphocytidyl-2-C-methyl-D-erythritol 2-phosphate (CDP-ME2P) to 2-C-methyl-D-erythritol 2,4-cyclodiphosphate (ME-CPP) with a corresponding release of cytidine 5-monophosphate (CMP) (IspF). The chain is Bifunctional enzyme IspD/IspF from Campylobacter fetus subsp. fetus (strain 82-40).